Reading from the N-terminus, the 154-residue chain is Transcriptional repressor NrdR (154 aa).

A zinc finger lies at 3-34; sequence CPFCGANDTKVIDSRLVAEGEQVRRRRECLAC. In terms of domain architecture, ATP-cone spans 49-139; the sequence is PRLIKTDGSR…VYRRFQDLNE (91 aa).

Belongs to the NrdR family. It depends on Zn(2+) as a cofactor.

Negatively regulates transcription of bacterial ribonucleotide reductase nrd genes and operons by binding to NrdR-boxes. In Pseudomonas fluorescens (strain ATCC BAA-477 / NRRL B-23932 / Pf-5), this protein is Transcriptional repressor NrdR.